The primary structure comprises 468 residues: Protein translocase subunit SecY (468 aa).

Residues 1–20 (MGARDVIYAMEKWFPEVERP) lie on the Cytoplasmic side of the membrane. The helical transmembrane segment at 21-47 (KKHVPLKEKFVWTGLALVLYYVLAEIP) threads the bilayer. The Extracellular segment spans residues 48–58 (VYGIPKKIQDY). The segment at residues 59–66 (FQFLRVVL) is an intramembrane region (helical). The chain crosses the membrane as a discontinuously helical span at residues 59–87 (FQFLRVVLAGRNGSILTLGIGPIVTAGII). The stretch at 67-78 (AGRNGSILTLGI) is an intramembrane region. An intramembrane region (helical) is located at residues 79 to 87 (GPIVTAGII). Residues 88 to 108 (LQLLVGSELIRLDLANPEDRR) are Cytoplasmic-facing. The chain crosses the membrane as a helical span at residues 109 to 133 (FYQALQRVFSVFMCFFEAAIWVLGG). Residues 134–144 (AFGRVGVDVTY) are Extracellular-facing. The chain crosses the membrane as a helical span at residues 145–169 (TIATLMIIQLALGGIILIVLDELVS). At 170-175 (KWGIGS) the chain is on the cytoplasmic side. The helical transmembrane segment at 176–194 (GISLFIAAGVSQRILTRSL) threads the bilayer. Topologically, residues 195–239 (NPLTDPNIIDPLTGKPAIVGAIPYFIQHILDGDLKGALYRGGSAP) are extracellular. Residues 240–261 (DMIAVTATIIVFLVVVYFESMR) traverse the membrane as a helical segment. The Cytoplasmic portion of the chain corresponds to 262 to 285 (VEIPLGYRGVTIRGRYPIKFLYVS). The helical transmembrane segment at 286-307 (NIPIILTFALYANIQLWARVLD) threads the bilayer. The Extracellular portion of the chain corresponds to 308–346 (RFGHPWLGRFDPVTGNPIGGFVLYVIPPRNIFTVIDNPV). The chain crosses the membrane as a helical span at residues 347 to 366 (RAIIYLILTIIFSLLFGFLW). At 367-409 (VELTGLDARTIARQLQRAGLQIPGFRRDPRTLERVLQKYIPYV) the chain is on the cytoplasmic side. Residues 410-428 (TFWGSLTVALISVLADFLG) form a helical membrane-spanning segment. Over 429–431 (ALG) the chain is Extracellular. Residues 432–446 (TGTGILLTVGILYRF) traverse the membrane as a helical segment. Residues 447–468 (YEEIAREQITEMFPALRRLFKG) lie on the Cytoplasmic side of the membrane.

It belongs to the SecY/SEC61-alpha family. Component of the Sec protein translocase complex. Heterotrimer consisting of alpha (SecY), beta (SecG) and gamma (SecE) subunits. The heterotrimers can form oligomers, although 1 heterotrimer is thought to be able to translocate proteins. Interacts with the ribosome. May interact with SecDF, and other proteins may be involved.

Its subcellular location is the cell membrane. Functionally, the central subunit of the protein translocation channel SecYEG. Consists of two halves formed by TMs 1-5 and 6-10. These two domains form a lateral gate at the front which open onto the bilayer between TMs 2 and 7, and are clamped together by SecE at the back. The channel is closed by both a pore ring composed of hydrophobic SecY resides and a short helix (helix 2A) on the extracellular side of the membrane which forms a plug. The plug probably moves laterally to allow the channel to open. The ring and the pore may move independently. This chain is Protein translocase subunit SecY, found in Pyrococcus horikoshii (strain ATCC 700860 / DSM 12428 / JCM 9974 / NBRC 100139 / OT-3).